The chain runs to 135 residues: Lymphocyte antigen 6B (135 aa).

The first 26 residues, 1–26, serve as a signal peptide directing secretion; it reads MNRSCAMKSCVLILLLALLCAERAQG. Residues 27–119 enclose the UPAR/Ly6 domain; sequence LNCYNCTMIP…PTGGSTWTMA (93 aa). Cystine bridges form between Cys-29/Cys-54, Cys-32/Cys-41, Cys-47/Cys-75, Cys-79/Cys-99, and Cys-100/Cys-105. Gly-113 carries GPI-anchor amidated glycine lipidation. Positions 114 to 135 are cleaved as a propeptide — removed in mature form; that stretch reads STWTMAGVLLFILGSVLLQTLL.

It is found in the cell membrane. In Rattus norvegicus (Rat), this protein is Lymphocyte antigen 6B (Ly6b).